A 789-amino-acid chain; its full sequence is MFPTGIFLMSVLISQMQGRGIVGVEGQELVHPKKLSLLQKRDLERIHDSDTPEEYEEELLYEIKLGRKTLTLHLLKAREFLALNYSETYYNIKREMVTRHPQILDHCFYQGSIIHEFDSAASISTCNGLRGFFRVNDQRYLIEPVKYSDEGDHLVFKYNVKAPYATNYSCEGLNFTKKSTLIDAKIIEEHKVEDYHKEKFIELFVVADEFVYRRNSKPQNKLRKRIWGMVNFVNMIYKALNIRVTLTGMEIWSAGDEIEIVSNLESTLLHFSTWQETVLKKRKDFDHVILLSGKWLYTSMQGIAYPGGICQTLRSCSVVKDLLPDVNIIGNRMAHQLGHSLGMRHDDFPCTCPLGKCVMGAGSIPAIKFSKCSQTQYQQFLKNQKPACILNNPLPEEFNDYPFCGNKKVDEGEECDCGPVQECTNPCCDAHKCVLKPGFTCVEGECCESCQMKKEGVICRPAKNECDISEVCTGYSPECPKDESQANGFPCKNGEGYCFMGLCPTRDDQCAELFSGGAEESHSLCYRMNQKGNRFGYCKNKDNTFVPCEEKDLKCGKIYCTGGRRSAHLGEDKTYNLKNVKQNISIKCKTMFLYHNSRDMGLVNSGTKCGEGMVCSNGECIEMEKAYNSTICSSLCDENDVDDNEPDCQCEEGPIITEWGEALNLTSVSIMVVVLVMVIIGVGLVILLIRYQKCIKMKQVQSSSREIRGIENKVYFPDEHQTRSEPIFTDIYPLHNTAESLERVPSTFSSPHYITLKSVSKDPRGIADPKQNDNMNLNLDSQSDCTRLG.

An N-terminal signal peptide occupies residues 1–25 (MFPTGIFLMSVLISQMQGRGIVGVE). A propeptide spanning residues 26–176 (GQELVHPKKL…NYSCEGLNFT (151 aa)) is cleaved from the precursor. N-linked (GlcNAc...) asparagine glycans are attached at residues N84, N167, and N174. The Extracellular segment spans residues 177 to 668 (KKSTLIDAKI…WGEALNLTSV (492 aa)). One can recognise a Peptidase M12B domain in the interval 199–393 (KFIELFVVAD…QKPACILNNP (195 aa)). Cystine bridges form between C310–C388, C350–C372, C352–C357, and C459–C479. Residues 401 to 487 (YPFCGNKKVD…ECPKDESQAN (87 aa)) enclose the Disintegrin domain. N-linked (GlcNAc...) asparagine glycans are attached at residues N583, N628, and N664. Residues 669–689 (SIMVVVLVMVIIGVGLVILLI) traverse the membrane as a helical segment. The Cytoplasmic segment spans residues 690–789 (RYQKCIKMKQ…DSQSDCTRLG (100 aa)). Positions 762-771 (DPRGIADPKQ) are enriched in basic and acidic residues. The disordered stretch occupies residues 762–789 (DPRGIADPKQNDNMNLNLDSQSDCTRLG). A compositionally biased stretch (polar residues) spans 772–789 (NDNMNLNLDSQSDCTRLG).

As to quaternary structure, interacts with ITM2B in sperm; the interaction increases following capacitation. Interacts with HSPA5 and CANX. In terms of tissue distribution, expressed specifically in the caput region of the epididymis (at protein level).

The protein localises to the membrane. Required for normal male fertility via maintenance of epithelial cell morphology in the caput epididymis and subsequently correct epididymis lumen structure required for sperm development. Plays a role in sperm motility, flagella morphology and tyrosine phosphorylation during sperm capacitance. Plays a role in normal expression levels of HSPA5, ITM2B and ADAM2 in sperm both prior to and post-capacitation. This is a non catalytic metalloprotease-like protein. This is Disintegrin and metalloproteinase domain-containing protein 7 from Rattus norvegicus (Rat).